The sequence spans 208 residues: MGLDFTLVADAEDLVAGVDEVGRGPLCGAVVTAAVILDPTRPILGLNDSKKLTEARREKLFDEICEKALSWCIARAEVEEIDELNILHATMLAMQRAVEGLSVTPKLAMIDGNRCPKLAMPAEAVVKGDSKVPAIAAASILAKVSRDREMAAFELIYPGYGIGGHKGYPTPVHLEALARLGPTPIHRRSFAPVRQAYEAREALGEIQS.

The region spanning 13-202 (DLVAGVDEVG…VRQAYEAREA (190 aa)) is the RNase H type-2 domain. Residues Asp-19, Glu-20, and Asp-111 each coordinate a divalent metal cation.

Belongs to the RNase HII family. The cofactor is Mn(2+). Mg(2+) is required as a cofactor.

It is found in the cytoplasm. It carries out the reaction Endonucleolytic cleavage to 5'-phosphomonoester.. In terms of biological role, endonuclease that specifically degrades the RNA of RNA-DNA hybrids. The sequence is that of Ribonuclease HII from Pseudomonas fluorescens (strain ATCC BAA-477 / NRRL B-23932 / Pf-5).